Reading from the N-terminus, the 252-residue chain is Phosphoribosylaminoimidazole-succinocarboxamide synthase 1 (252 aa).

It belongs to the SAICAR synthetase family.

The catalysed reaction is 5-amino-1-(5-phospho-D-ribosyl)imidazole-4-carboxylate + L-aspartate + ATP = (2S)-2-[5-amino-1-(5-phospho-beta-D-ribosyl)imidazole-4-carboxamido]succinate + ADP + phosphate + 2 H(+). It participates in purine metabolism; IMP biosynthesis via de novo pathway; 5-amino-1-(5-phospho-D-ribosyl)imidazole-4-carboxamide from 5-amino-1-(5-phospho-D-ribosyl)imidazole-4-carboxylate: step 1/2. This chain is Phosphoribosylaminoimidazole-succinocarboxamide synthase 1 (purC1), found in Caulobacter vibrioides (strain ATCC 19089 / CIP 103742 / CB 15) (Caulobacter crescentus).